The following is a 698-amino-acid chain: ATP-dependent RNA helicase DHX33 (698 aa).

Disordered stretches follow at residues methionine 1–proline 20 and threonine 29–serine 50. Positions methionine 1–arginine 71 are required for nucleolar location. The segment covering alanine 30 to arginine 40 has biased composition (gly residues). The Helicase ATP-binding domain occupies leucine 75–glutamate 243. An ATP-binding site is contributed by glycine 88–threonine 95. The DEAH box motif lies at aspartate 185–histidine 188. The 171-residue stretch at glutamine 271–lysine 441 folds into the Helicase C-terminal domain. Residues alanine 462 to leucine 553 form an HA2; required for interaction with EIF3G and RPL26 region. A Critical for rDNA-binding motif is present at residues valine 536–histidine 550.

The protein belongs to the DEAD box helicase family. DEAH subfamily. In terms of assembly, interacts with UBTF. Interacts with DDX3X, EIF3G and EIF3H; the interaction is independent of RNA. Interacts (via HA2 region and Helicase C-terminal domain) with the components of the large ribosomal subunit RPL3, RPL7, RPL26 and RPL27. Binds to mRNA. Interacts (via the helicase C-terminal domain) with MAVS. Binds to double-stranded RNA (via the helicase C-terminal domain). In terms of processing, ubiquitinated, leading to its degradation by the proteasome. Deubiquitinated by USP36.

The protein resides in the nucleus. It localises to the nucleolus. It is found in the nucleoplasm. The protein localises to the cytoplasm. Its subcellular location is the inflammasome. The enzyme catalyses ATP + H2O = ADP + phosphate + H(+). Functionally, implicated in nucleolar organization, ribosome biogenesis, protein synthesis and cytoplasmic dsRNA sensing. Stimulates RNA polymerase I transcription of the 47S precursor rRNA. Associates with ribosomal DNA (rDNA) loci where it is involved in POLR1A recruitment. In the cytoplasm, promotes elongation-competent 80S ribosome assembly at the late stage of mRNA translation initiation. Senses cytosolic dsRNA mediating NLRP3 inflammasome formation in macrophages and type I interferon production in myeloid dendritic cells. Required for NLRP3 activation induced by viral dsRNA and bacterial RNA. In dendritic cells, required for induction of type I interferon production induced by cytoplasmic dsRNA via the activation of MAPK and NF-kappa-B signaling pathways. The chain is ATP-dependent RNA helicase DHX33 from Mus musculus (Mouse).